The following is a 144-amino-acid chain: 3-hydroxyacyl-[acyl-carrier-protein] dehydratase FabZ (144 aa).

His-48 is an active-site residue.

It belongs to the thioester dehydratase family. FabZ subfamily.

The protein localises to the cytoplasm. It catalyses the reaction a (3R)-hydroxyacyl-[ACP] = a (2E)-enoyl-[ACP] + H2O. Its function is as follows. Involved in unsaturated fatty acids biosynthesis. Catalyzes the dehydration of short chain beta-hydroxyacyl-ACPs and long chain saturated and unsaturated beta-hydroxyacyl-ACPs. In Bacillus cereus (strain AH187), this protein is 3-hydroxyacyl-[acyl-carrier-protein] dehydratase FabZ.